Consider the following 181-residue polypeptide: ADP-ribosylation factor-like protein 1 (181 aa).

Gly2 carries N-myristoyl glycine lipidation. GTP-binding positions include 24 to 31 (GLDGAGKT), 45 to 48 (TIPT), Gly70, 126 to 129 (NKQD), and 160 to 161 (AT). Thr31 and Thr48 together coordinate Mg(2+).

It belongs to the small GTPase superfamily. Arf family. As to quaternary structure, the GTP-bound form interacts with GOLGA1. The GTP-bound form interacts with GOLGA4 and RGPD8. The GTP-bound form directly interacts with ARFIP2. Binds to SCOC, preferentially in its GTP-bound form. May interact with UNC119. Interacts with ARFIP1; this interaction directs ARFIP1 to the trans-Golgi membranes. Interacts with ARFGEF1 (via N-terminus). In terms of tissue distribution, detected in heart, liver, lung and liver (at protein level). Detected in fetal heart, lung, liver and kidney. Detected in adult heart, placenta, lung, liver, skeletal muscle, kidney and pancreas.

The protein resides in the golgi apparatus membrane. It localises to the golgi apparatus. The protein localises to the trans-Golgi network membrane. It is found in the membrane. Its function is as follows. GTP-binding protein that recruits several effectors, such as golgins, arfaptins and Arf-GEFs to the trans-Golgi network, and modulates their functions at the Golgi complex. Plays thereby a role in a wide range of fundamental cellular processes, including cell polarity, innate immunity, or protein secretion mediated by arfaptins, which were shown to play a role in maintaining insulin secretion from pancreatic beta cells. The chain is ADP-ribosylation factor-like protein 1 (ARL1) from Homo sapiens (Human).